The primary structure comprises 583 residues: Afadin- and alpha-actinin-binding protein (583 aa).

3 coiled-coil regions span residues 108–220 (NNVE…LAIE), 255–333 (DYEA…QLTN), and 420–453 (EEKERLKEEWRLFDEQKRNFEKERKNFTEAAIRL). Positions 285-328 (LSPCPPLNRGGSAEESQELGDSDREERSAETSRETLDQSCEHAR) are disordered. Residues 305–328 (DSDREERSAETSRETLDQSCEHAR) are compositionally biased toward basic and acidic residues. Positions 480–527 (DRMRSSSSDGQSALSVKSEPEIRTSSSKAPPVKSSAYTTFSTPKSSKS) are disordered. The segment covering 484 to 494 (SSSSDGQSALS) has biased composition (polar residues). The span at 504–515 (SSSKAPPVKSSA) shows a compositional bias: low complexity. The span at 516-527 (YTTFSTPKSSKS) shows a compositional bias: polar residues.

It belongs to the ADIP family.

It is found in the cell junction. It localises to the adherens junction. Its subcellular location is the cytoplasm. The protein localises to the cytoskeleton. The protein resides in the microtubule organizing center. It is found in the centrosome. It localises to the centriolar satellite. Belongs to an adhesion system, which plays a role in the organization of homotypic, interneuronal and heterotypic cell-cell adherens junctions (AJs). Involved in cell movement. Acts as a centrosome maturation factor, probably by maintaining the integrity of the pericentriolar material and proper microtubule nucleation at mitotic spindle poles. This Oryzias latipes (Japanese rice fish) protein is Afadin- and alpha-actinin-binding protein (ssx2ip).